The sequence spans 303 residues: Taste receptor type 2 member 13 (303 aa).

Residues 1–7 (MESALLS) are Extracellular-facing. Residues 8 to 28 (ILTLVIIAEFVIGNLSNGFXV) form a helical membrane-spanning segment. Topologically, residues 29 to 55 (LINCIDWVSKRQLSSVDKILTFLAISR) are cytoplasmic. A helical membrane pass occupies residues 56–76 (IGLIWELLVSWFLGLHYLAIF). At 77-85 (VSGTGLRIM) the chain is on the extracellular side. The chain crosses the membrane as a helical span at residues 86–106 (IFSWVVSNHFSLWLATILSIF). Over 107-128 (YLLKIASFSSPAFLYLKWRVNQ) the chain is Cytoplasmic. A helical membrane pass occupies residues 129–149 (VILMILLGTLVFLFLNLIQIN). Residues 150 to 184 (IHIKDWLDRCERNTIWNFSMSGLPTFSVPVKFTMT) are Extracellular-facing. Asn-166 carries an N-linked (GlcNAc...) asparagine glycan. The chain crosses the membrane as a helical span at residues 185–205 (MFSLAPFTVALISFLLLIFSL). Residues 206-232 (RKHLQKMQLNYKGHREPRTKAHINALK) lie on the Cytoplasmic side of the membrane. The chain crosses the membrane as a helical span at residues 233 to 253 (IVISFLLLYASFFLCILISWI). Topologically, residues 254-261 (SELYQNTL) are extracellular. A helical transmembrane segment spans residues 262 to 282 (IHMFCQTIGVFYPSSHSFLLI). Residues 283–303 (LGNPKLRQASLLVAAKVWAKR) lie on the Cytoplasmic side of the membrane.

It belongs to the G-protein coupled receptor T2R family.

Its subcellular location is the membrane. Its function is as follows. Receptor that may play a role in the perception of bitterness and is gustducin-linked. May play a role in sensing the chemical composition of the gastrointestinal content. The activity of this receptor may stimulate alpha gustducin, mediate PLC-beta-2 activation and lead to the gating of TRPM5. The polypeptide is Taste receptor type 2 member 13 (TAS2R13) (Papio hamadryas (Hamadryas baboon)).